A 924-amino-acid polypeptide reads, in one-letter code: Exocyst complex component 2 (924 aa).

In terms of domain architecture, IPT/TIG spans 8–93; it reads PLVTGISPNE…GTSTVSFKLL (86 aa). Residues 240–260 adopt a coiled-coil conformation; that stretch reads QKLENVLNRASNTADTLFQEV. Residues Ser-431, Ser-432, and Ser-435 each carry the phosphoserine modification. Thr-440 bears the Phosphothreonine mark. Lys-454 carries the post-translational modification N6-acetyllysine.

It belongs to the SEC5 family. As to quaternary structure, the exocyst complex is composed of EXOC1, EXOC2, EXOC3, EXOC4, EXOC5, EXOC6, EXOC7 and EXOC8. Interacts with EXOC3L1. Interacts with GNEFR/DELGEF; this interaction occurs only in the presence of magnesium or manganese and is stimulated by dCTP or GTP. Interacts with RALA and RALB. Interacts with ARL13B; regulates ARL13B localization to the cilium membrane.

It localises to the midbody. It is found in the midbody ring. Functionally, component of the exocyst complex involved in the docking of exocytic vesicles with fusion sites on the plasma membrane. The sequence is that of Exocyst complex component 2 (Exoc2) from Mus musculus (Mouse).